The following is a 166-amino-acid chain: Large ribosomal subunit protein uL10 (166 aa).

This sequence belongs to the universal ribosomal protein uL10 family. Part of the ribosomal stalk of the 50S ribosomal subunit. The N-terminus interacts with L11 and the large rRNA to form the base of the stalk. The C-terminus forms an elongated spine to which L12 dimers bind in a sequential fashion forming a multimeric L10(L12)X complex.

Its function is as follows. Forms part of the ribosomal stalk, playing a central role in the interaction of the ribosome with GTP-bound translation factors. This is Large ribosomal subunit protein uL10 from Pseudomonas syringae pv. syringae (strain B728a).